The chain runs to 412 residues: Lysosomal phospholipase A and acyltransferase (412 aa).

The first 33 residues, 1–33 (MDRHLCTCRETQLRSGLLLPLFLLMMLADLTLP), serve as a signal peptide directing secretion. Asp46 contacts substrate. Cysteines 65 and 89 form a disulfide. The N-linked (GlcNAc...) asparagine glycan is linked to Asn99. The Acyl-ester intermediate role is filled by Ser198. A Zn(2+)-binding site is contributed by Ser198. Met199 contacts substrate. N-linked (GlcNAc...) asparagine glycosylation is found at Asn273 and Asn289. Residue Cys355 participates in Zn(2+) binding. Catalysis depends on charge relay system residues Asp360 and His392. His392 contacts Zn(2+). Residue Asn398 is glycosylated (N-linked (GlcNAc...) asparagine).

The protein belongs to the AB hydrolase superfamily. Lipase family. In terms of processing, N-glycosylated. N-glycosylation is important for maturation of the enzyme and normal subcellular location. In terms of tissue distribution, detected in blood plasma. Detected in alveolar macrophages (at protein level). Detected in heart, liver, spleen, kidney, thymus, brain and lung.

Its subcellular location is the secreted. The protein localises to the lysosome. It localises to the membrane. It catalyses the reaction a 1,2-diacyl-sn-glycero-3-phosphocholine + H2O = a 2-acyl-sn-glycero-3-phosphocholine + a fatty acid + H(+). The catalysed reaction is 1-hexadecanoyl-2-(9Z-octadecenoyl)-sn-glycero-3-phosphocholine + H2O = 2-(9Z-octadecenoyl)-sn-glycero-3-phosphocholine + hexadecanoate + H(+). It carries out the reaction 1,2-di-(9Z-octadecenoyl)-sn-glycero-3-phosphocholine + H2O = 2-(9Z-octadecenoyl)-sn-glycero-3-phosphocholine + (9Z)-octadecenoate + H(+). The enzyme catalyses 1-hexadecanoyl-2-glutaroyl-sn-glycero-3-phosphocholine + H2O = 2-glutaroyl-sn-glycero-3-phosphocholine + hexadecanoate + H(+). It catalyses the reaction 1-hexadecanoyl-2-nonadioyl-sn-glycero-3-phosphocholine + H2O = 2-nonadioyl-sn-glycero-3-phosphocholine + hexadecanoate + H(+). The catalysed reaction is 1-hexadecanoyl-2-(5-oxopentanoyl)-sn-glycero-3-phosphocholine + H2O = 2-(5-oxopentanoyl)-sn-glycero-3-phosphocholine + hexadecanoate + H(+). It carries out the reaction 1-hexadecanoyl-2-(9-oxononanoyl)-sn-glycero-3-phosphocholine + H2O = 2-(9-oxononanoyl)-sn-glycero-3-phosphocholine + hexadecanoate + H(+). The enzyme catalyses 1,2-dihexadecanoyl-sn-glycero-3-phosphocholine + H2O = 2-hexadecanoyl-sn-glycero-3-phosphocholine + hexadecanoate + H(+). It catalyses the reaction a 1,2-diacyl-sn-glycero-3-phosphocholine + H2O = a 1-acyl-sn-glycero-3-phosphocholine + a fatty acid + H(+). The catalysed reaction is 1-hexadecanoyl-2-(9Z-octadecenoyl)-sn-glycero-3-phosphocholine + H2O = 1-hexadecanoyl-sn-glycero-3-phosphocholine + (9Z)-octadecenoate + H(+). It carries out the reaction 1,2-di-(9Z-octadecenoyl)-sn-glycero-3-phosphocholine + H2O = 1-(9Z-octadecenoyl)-sn-glycero-3-phosphocholine + (9Z)-octadecenoate + H(+). The enzyme catalyses 1,2-dihexadecanoyl-sn-glycero-3-phosphocholine + H2O = 1-hexadecanoyl-sn-glycero-3-phosphocholine + hexadecanoate + H(+). It catalyses the reaction a 1-acyl-sn-glycero-3-phosphocholine + H2O = sn-glycerol 3-phosphocholine + a fatty acid + H(+). The catalysed reaction is 1-hexadecanoyl-sn-glycero-3-phosphocholine + H2O = sn-glycerol 3-phosphocholine + hexadecanoate + H(+). It carries out the reaction N-(acetyl)-sphing-4-enine + a 1,2-diacyl-sn-glycero-3-phosphoethanolamine = 1-O-acyl-N-(acetyl)-sphing-4-enine + a 2-acyl-sn-glycero-3-phosphoethanolamine. The enzyme catalyses 1-hexadecanoyl-2-(9Z-octadecenoyl)-sn-glycero-3-phosphoethanolamine + N-(acetyl)-sphing-4-enine = 2-(9Z-octadecenoyl)-sn-glycero-3-phosphoethanolamine + 1-hexadecanoyl-N-(acetyl)-sphing-4-enine. It catalyses the reaction 1-hexadecanoyl-2-(9Z,12Z-octadecadienoyl)-sn-glycero-3-phosphoethanolamine + N-(acetyl)-sphing-4-enine = 2-(9Z,12Z)-octadecadienoyl-sn-glycero-3-phosphoethanolamine + 1-hexadecanoyl-N-(acetyl)-sphing-4-enine. The catalysed reaction is 1-hexadecanoyl-2-(5Z,8Z,11Z,14Z-eicosatetraenoyl)-sn-glycero-3-phosphoethanolamine + N-(acetyl)-sphing-4-enine = 2-(5Z,8Z,11Z,14Z)-eicosatetraenoyl-sn-glycero-3-phosphoethanolamine + 1-hexadecanoyl-N-(acetyl)-sphing-4-enine. It carries out the reaction N-(acetyl)-sphing-4-enine + a 1,2-diacyl-sn-glycero-3-phosphoethanolamine = 1-O-acyl-N-(acetyl)-sphing-4-enine + a 1-acyl-sn-glycero-3-phosphoethanolamine. The enzyme catalyses 1-hexadecanoyl-2-(9Z-octadecenoyl)-sn-glycero-3-phosphoethanolamine + N-(acetyl)-sphing-4-enine = 1-(9Z-octadecenoyl)-N-(acetyl)-sphing-4-enine + 1-hexadecanoyl-sn-glycero-3-phosphoethanolamine. It catalyses the reaction 1-hexadecanoyl-2-(9Z,12Z-octadecadienoyl)-sn-glycero-3-phosphoethanolamine + N-(acetyl)-sphing-4-enine = 1-(9Z,12Z-octadecadienoyl)-N-acetylsphing-4-enine + 1-hexadecanoyl-sn-glycero-3-phosphoethanolamine. The catalysed reaction is 1-hexadecanoyl-2-(5Z,8Z,11Z,14Z-eicosatetraenoyl)-sn-glycero-3-phosphoethanolamine + N-(acetyl)-sphing-4-enine = 1-(5Z,8Z,11Z,14Z)-eicosatetraenoyl-N-(acetyl)-sphing-4-enine + 1-hexadecanoyl-sn-glycero-3-phosphoethanolamine. It carries out the reaction N-(acetyl)-sphing-4-enine + a 1,2-diacyl-sn-glycero-3-phosphocholine = 1-O-acyl-N-(acetyl)-sphing-4-enine + a 2-acyl-sn-glycero-3-phosphocholine. The enzyme catalyses 1-hexadecanoyl-2-(9Z-octadecenoyl)-sn-glycero-3-phosphocholine + N-(acetyl)-sphing-4-enine = 1-hexadecanoyl-N-(acetyl)-sphing-4-enine + 2-(9Z-octadecenoyl)-sn-glycero-3-phosphocholine. It catalyses the reaction 1-hexadecanoyl-2-(9Z,12Z-octadecadienoyl)-sn-glycero-3-phosphocholine + N-(acetyl)-sphing-4-enine = 2-(9Z,12Z-octadecadienoyl)-sn-glycero-3-phosphocholine + 1-hexadecanoyl-N-(acetyl)-sphing-4-enine. The catalysed reaction is 1-hexadecanoyl-2-(5Z,8Z,11Z,14Z-eicosatetraenoyl)-sn-glycero-3-phosphocholine + N-(acetyl)-sphing-4-enine = 1-hexadecanoyl-N-(acetyl)-sphing-4-enine + 2-(5Z,8Z,11Z,14Z)-eicosatetraenoyl-sn-glycero-3-phosphocholine. It carries out the reaction 1-hexadecanoyl-2-(4Z,7Z,10Z,13Z,16Z,19Z-docosahexaenoyl)-sn-glycero-3-phosphocholine + N-(acetyl)-sphing-4-enine = 2-(4Z,7Z,10Z,13Z,16Z,19Z-docosahexaenoyl)-sn-glycero-3-phosphocholine + 1-hexadecanoyl-N-(acetyl)-sphing-4-enine. The enzyme catalyses 1-hexadecanoyl-2-nonadioyl-sn-glycero-3-phosphocholine + N-(acetyl)-sphing-4-enine = 2-nonadioyl-sn-glycero-3-phosphocholine + 1-hexadecanoyl-N-(acetyl)-sphing-4-enine. It catalyses the reaction 1-octadecanoyl-2-(9Z-octadecenoyl)-sn-glycero-3-phosphocholine + N-(acetyl)-sphing-4-enine = 1-octadecanoyl-N-(acetyl)-sphing-4-enine + 2-(9Z-octadecenoyl)-sn-glycero-3-phosphocholine. The catalysed reaction is 1-(9Z)-octadecenoyl-2-octadecanoyl-sn-glycero-3-phosphocholine + N-(acetyl)-sphing-4-enine = 2-octadecanoyl-sn-glycero-3-phosphocholine + 1-(9Z-octadecenoyl)-N-(acetyl)-sphing-4-enine. It carries out the reaction 1-octadecanoyl-2-(5Z,8Z,11Z,14Z-eicosatetraenoyl)-sn-glycero-3-phosphocholine + N-(acetyl)-sphing-4-enine = 1-octadecanoyl-N-(acetyl)-sphing-4-enine + 2-(5Z,8Z,11Z,14Z)-eicosatetraenoyl-sn-glycero-3-phosphocholine. The enzyme catalyses 1-(9Z-octadecenoyl)-2-hexadecanoyl-sn-glycero-3-phosphocholine + N-(acetyl)-sphing-4-enine = 1-(9Z-octadecenoyl)-N-(acetyl)-sphing-4-enine + 2-hexadecanoyl-sn-glycero-3-phosphocholine. It catalyses the reaction N-(acetyl)-sphing-4-enine + a 1,2-diacyl-sn-glycero-3-phosphocholine = 1-O-acyl-N-(acetyl)-sphing-4-enine + a 1-acyl-sn-glycero-3-phosphocholine. The catalysed reaction is 1-hexadecanoyl-2-(9Z-octadecenoyl)-sn-glycero-3-phosphocholine + N-(acetyl)-sphing-4-enine = 1-(9Z-octadecenoyl)-N-(acetyl)-sphing-4-enine + 1-hexadecanoyl-sn-glycero-3-phosphocholine. It carries out the reaction 1-hexadecanoyl-2-(9Z,12Z-octadecadienoyl)-sn-glycero-3-phosphocholine + N-(acetyl)-sphing-4-enine = 1-(9Z,12Z-octadecadienoyl)-N-acetylsphing-4-enine + 1-hexadecanoyl-sn-glycero-3-phosphocholine. The enzyme catalyses 1-hexadecanoyl-2-(5Z,8Z,11Z,14Z-eicosatetraenoyl)-sn-glycero-3-phosphocholine + N-(acetyl)-sphing-4-enine = 1-(5Z,8Z,11Z,14Z)-eicosatetraenoyl-N-(acetyl)-sphing-4-enine + 1-hexadecanoyl-sn-glycero-3-phosphocholine. It catalyses the reaction 1-hexadecanoyl-2-(4Z,7Z,10Z,13Z,16Z,19Z-docosahexaenoyl)-sn-glycero-3-phosphocholine + N-(acetyl)-sphing-4-enine = 1-(4Z,7Z,10Z,13Z,16Z,19Z-docosahexaenoyl)-N-(acetyl)-sphing-4-enine + 1-hexadecanoyl-sn-glycero-3-phosphocholine. The catalysed reaction is 1-octadecanoyl-2-(9Z-octadecenoyl)-sn-glycero-3-phosphocholine + N-(acetyl)-sphing-4-enine = 1-(9Z-octadecenoyl)-N-(acetyl)-sphing-4-enine + 1-octadecanoyl-sn-glycero-3-phosphocholine. It carries out the reaction 1-octadecanoyl-2-(9Z,12Z)-octadecadienoyl-sn-glycero-3-phosphocholine + N-(acetyl)-sphing-4-enine = 1-(9Z,12Z-octadecadienoyl)-N-acetylsphing-4-enine + 1-octadecanoyl-sn-glycero-3-phosphocholine. The enzyme catalyses 1-(9Z-octadecenoyl)-2-hexadecanoyl-sn-glycero-3-phosphocholine + N-(acetyl)-sphing-4-enine = 1-hexadecanoyl-N-(acetyl)-sphing-4-enine + 1-(9Z-octadecenoyl)-sn-glycero-3-phosphocholine. It catalyses the reaction 1-(9Z)-octadecenoyl-2-octadecanoyl-sn-glycero-3-phosphocholine + N-(acetyl)-sphing-4-enine = 1-octadecanoyl-N-(acetyl)-sphing-4-enine + 1-(9Z-octadecenoyl)-sn-glycero-3-phosphocholine. The catalysed reaction is 1,2-di-(9Z-octadecenoyl)-sn-glycero-3-phosphocholine + N-(acetyl)-sphing-4-enine = 1-(9Z-octadecenoyl)-N-(acetyl)-sphing-4-enine + 1-(9Z-octadecenoyl)-sn-glycero-3-phosphocholine. It carries out the reaction 1-octadecanoyl-2-(5Z,8Z,11Z,14Z-eicosatetraenoyl)-sn-glycero-3-phosphocholine + N-(acetyl)-sphing-4-enine = 1-(5Z,8Z,11Z,14Z)-eicosatetraenoyl-N-(acetyl)-sphing-4-enine + 1-octadecanoyl-sn-glycero-3-phosphocholine. The enzyme catalyses a 1,2-diacyl-sn-glycero-3-phospho-L-serine + N-(acetyl)-sphing-4-enine = a 2-acyl-sn-glycero-3-phospho-L-serine + 1-O-acyl-N-(acetyl)-sphing-4-enine. It catalyses the reaction 1-octadecanoyl-2-(9Z-octadecenoyl)-sn-glycero-3-phospho-L-serine + N-(acetyl)-sphing-4-enine = 2-(9Z-octadecenoyl)-sn-glycero-3-phospho-L-serine + 1-octadecanoyl-N-(acetyl)-sphing-4-enine. The catalysed reaction is a 1,2-diacyl-sn-glycero-3-phospho-L-serine + N-(acetyl)-sphing-4-enine = 1-O-acyl-N-(acetyl)-sphing-4-enine + a 1-acyl-sn-glycero-3-phospho-L-serine. It carries out the reaction 1-octadecanoyl-2-(9Z-octadecenoyl)-sn-glycero-3-phospho-L-serine + N-(acetyl)-sphing-4-enine = 1-octadecanoyl-sn-glycero-3-phosphoserine + 1-(9Z-octadecenoyl)-N-(acetyl)-sphing-4-enine. The enzyme catalyses a 1,2-diacyl-sn-glycero-3-phospho-(1'-sn-glycerol) + N-(acetyl)-sphing-4-enine = 2-acyl-sn-glycero-3-phospho-(1'-sn-glycerol) + 1-O-acyl-N-(acetyl)-sphing-4-enine. It catalyses the reaction 1-octadecanoyl-2-(9Z-octadecenoyl)-sn-glycero-3-phospho-(1'-sn-glycerol) + N-(acetyl)-sphing-4-enine = 2-(9Z-octadecenoyl)-sn-glycero-3-phospho-(1'-sn-glycerol) + 1-octadecanoyl-N-(acetyl)-sphing-4-enine. The catalysed reaction is a 1,2-diacyl-sn-glycero-3-phospho-(1'-sn-glycerol) + N-(acetyl)-sphing-4-enine = 1-O-acyl-N-(acetyl)-sphing-4-enine + 1-acyl-sn-glycero-3-phospho-(1'-sn-glycerol). It carries out the reaction 1-octadecanoyl-2-(9Z-octadecenoyl)-sn-glycero-3-phospho-(1'-sn-glycerol) + N-(acetyl)-sphing-4-enine = 1-octadecanoyl-sn-glycero-3-phospho-(1'-sn-glycerol) + 1-(9Z-octadecenoyl)-N-(acetyl)-sphing-4-enine. The enzyme catalyses an N-acylethanolamine + a 1,2-diacyl-sn-glycero-3-phosphocholine = 2-(acylamino)ethyl fatty acid + a 2-acyl-sn-glycero-3-phosphocholine. It catalyses the reaction an N-acylethanolamine + a 1,2-diacyl-sn-glycero-3-phosphocholine = 2-(acylamino)ethyl fatty acid + a 1-acyl-sn-glycero-3-phosphocholine. The catalysed reaction is N-(5Z,8Z,11Z,14Z-eicosatetraenoyl)-ethanolamine + 1,2-di-(9Z-octadecenoyl)-sn-glycero-3-phosphocholine = 2-[(5Z,8Z,11Z,14Z)-eicosatetraenoylamino]ethyl (9Z)-octadecenoate + (9Z-octadecenoyl)-sn-glycero-3-phosphocholine. It carries out the reaction N-(9Z-octadecenoyl) ethanolamine + 1,2-di-(9Z-octadecenoyl)-sn-glycero-3-phosphocholine = 2-[(9Z)-octadecenoylamino]ethyl (9Z)-octadecenoate + (9Z-octadecenoyl)-sn-glycero-3-phosphocholine. The enzyme catalyses a 3-acyl-sn-glycerol + a 1,2-diacyl-sn-glycero-3-phosphocholine = a 1,3-diacylglycerol + a 1-acyl-sn-glycero-3-phosphocholine. It catalyses the reaction a 3-acyl-sn-glycerol + a 1,2-diacyl-sn-glycero-3-phosphocholine = a 1,3-diacylglycerol + a 2-acyl-sn-glycero-3-phosphocholine. The catalysed reaction is 3-(9Z-octadecenoyl)-sn-glycerol + 1,2-di-(9Z-octadecenoyl)-sn-glycero-3-phosphocholine = 1,3-di-(9Z-octadecenoyl)-glycerol + (9Z-octadecenoyl)-sn-glycero-3-phosphocholine. It carries out the reaction 3-hexadecanoyl-sn-glycerol + 1,2-di-(9Z-octadecenoyl)-sn-glycero-3-phosphocholine = 1-(9Z)-octadecenoyl-3-hexadecanoyl-sn-glycerol + (9Z-octadecenoyl)-sn-glycero-3-phosphocholine. The enzyme catalyses a 1-acyl-sn-glycerol + a 1,2-diacyl-sn-glycero-3-phosphocholine = a 1,3-diacylglycerol + a 2-acyl-sn-glycero-3-phosphocholine. It catalyses the reaction a 1-acyl-sn-glycerol + a 1,2-diacyl-sn-glycero-3-phosphocholine = a 1,3-diacylglycerol + a 1-acyl-sn-glycero-3-phosphocholine. The catalysed reaction is 1-(9Z-octadecenoyl)-sn-glycerol + 1,2-di-(9Z-octadecenoyl)-sn-glycero-3-phosphocholine = 1,3-di-(9Z-octadecenoyl)-glycerol + (9Z-octadecenoyl)-sn-glycero-3-phosphocholine. It carries out the reaction 1-hexadecanoyl-sn-glycerol + 1,2-di-(9Z-octadecenoyl)-sn-glycero-3-phosphocholine = 1-hexadecanoyl-3-(9Z)-octadecenoyl-sn-glycerol + (9Z-octadecenoyl)-sn-glycero-3-phosphocholine. The enzyme catalyses a 2-acylglycerol + a 1,2-diacyl-sn-glycero-3-phosphocholine = a 1,2-diacylglycerol + a 2-acyl-sn-glycero-3-phosphocholine. It catalyses the reaction a 2-acylglycerol + a 1,2-diacyl-sn-glycero-3-phosphocholine = a 1,2-diacylglycerol + a 1-acyl-sn-glycero-3-phosphocholine. The catalysed reaction is 2-hexadecanoylglycerol + 1,2-di-(9Z-octadecenoyl)-sn-glycero-3-phosphocholine = 1-(9Z)-octadecenoyl-2-hexadecanoylglycerol + (9Z-octadecenoyl)-sn-glycero-3-phosphocholine. It carries out the reaction 1-O-alkylglycerol + a 1,2-diacyl-sn-glycero-3-phosphocholine = 1-O-alkyl-3-acylglycerol + a 1-acyl-sn-glycero-3-phosphocholine. The enzyme catalyses 1-O-alkylglycerol + a 1,2-diacyl-sn-glycero-3-phosphocholine = 1-O-alkyl-3-acylglycerol + a 2-acyl-sn-glycero-3-phosphocholine. It catalyses the reaction 1-O-hexadecylglycerol + 1,2-di-(9Z-octadecenoyl)-sn-glycero-3-phosphocholine = 1-O-hexadecyl-3-(9Z)-octadecenoylglycerol + (9Z-octadecenoyl)-sn-glycero-3-phosphocholine. The catalysed reaction is 1-O-alkyl-2-acyl-sn-glycerol + a 1,2-diacyl-sn-glycero-3-phosphocholine = 1-O-alkyl-2,3-diacyl-sn-glycerol + a 2-acyl-sn-glycero-3-phosphocholine. It carries out the reaction 1-O-alkyl-2-acyl-sn-glycerol + a 1,2-diacyl-sn-glycero-3-phosphocholine = 1-O-alkyl-2,3-diacyl-sn-glycerol + a 1-acyl-sn-glycero-3-phosphocholine. The enzyme catalyses 1-O-hexadecyl-2-acetyl-sn-glycerol + 1,2-di-(9Z-octadecenoyl)-sn-glycero-3-phosphocholine = 1-O-hexadecyl-2-acetyl-3-(9Z)-octadecenoyl-sn-glycerol + (9Z-octadecenoyl)-sn-glycero-3-phosphocholine. It catalyses the reaction 1-O-hexadecyl-2-O-methyl-sn-glycerol + 1,2-di-(9Z-octadecenoyl)-sn-glycero-3-phosphocholine = 1-O-hexadecyl-2-O-methyl-3-(9Z)-octadecenoyl-sn-glycerol + (9Z-octadecenoyl)-sn-glycero-3-phosphocholine. The catalysed reaction is a 1,2-diacyl-sn-glycero-3-phosphoethanolamine + H2O = a 1-acyl-sn-glycero-3-phosphoethanolamine + a fatty acid + H(+). It carries out the reaction 1-acyl-2-(5Z,8Z,11Z,14Z)-eicosatetraenoyl-sn-glycero-3-phosphoethanolamine + H2O = a 1-acyl-sn-glycero-3-phosphoethanolamine + (5Z,8Z,11Z,14Z)-eicosatetraenoate + H(+). The enzyme catalyses a 1,2-diacyl-sn-glycero-3-phospho-(1'-sn-glycerol) + H2O = 1-acyl-sn-glycero-3-phospho-(1'-sn-glycerol) + a fatty acid + H(+). It catalyses the reaction 1-hexadecanoyl-2-(9Z-octadecenoyl)-sn-glycero-3-phospho-(1'-sn-glycerol) + H2O = 1-hexadecanoyl-sn-glycero-3-phospho-(1'-sn-glycerol) + (9Z)-octadecenoate + H(+). The catalysed reaction is a 1,2-diacyl-sn-glycero-3-phospho-(1'-sn-glycerol) + H2O = 2-acyl-sn-glycero-3-phospho-(1'-sn-glycerol) + a fatty acid + H(+). It carries out the reaction 1-hexadecanoyl-2-(9Z-octadecenoyl)-sn-glycero-3-phospho-(1'-sn-glycerol) + H2O = 2-(9Z-octadecenoyl)-sn-glycero-3-phospho-(1'-sn-glycerol) + hexadecanoate + H(+). Phospholipase sn-2 versus sn-1 positional specificity is affected by the phospholipid composition of membranes. Phospholipase A2 activity toward 1-hexadecanoyl-2-(5Z,8Z,11Z,14Z-eicosatetraenoyl)-sn-glycero-3-phosphocholine (PAPE) is enhanced in the presence of 1,2-dioleoyl-sn-glycero-3-phosphocholine (DOPC), which promotes lipid bilayer formation. O-acyltransferase activity is inhibited by antiarrhythmic drug amiodarone. Has dual calcium-independent phospholipase and O-acyltransferase activities with a potential role in glycerophospholipid homeostasis and remodeling of acyl groups of lipophilic alcohols present in acidic cellular compartments. Catalyzes hydrolysis of the ester bond of the fatty acyl group attached at sn-1 or sn-2 position of phospholipids (phospholipase A1 or A2 activity) and transfer it to the hydroxyl group at the first carbon of lipophilic alcohols (O-acyltransferase activity). Among preferred fatty acyl donors are phosphatidylcholines, phosphatidylethanolamines, phosphatidylglycerols and phosphatidylserines. Favors sn-2 over sn-1 deacylation of unsaturated fatty acyl groups of phosphatidylcholines, phosphatidylethanolamines, and phosphatidylglycerols. Among preferred fatty acyl acceptors are natural lipophilic alcohols including short-chain ceramide N-acetyl-sphingosine (C2 ceramide), alkylacylglycerols, monoacylglycerols, and acylethanolamides such as anandamide and oleoylethanolamide. Selectively hydrolyzes the sn-1 fatty acyl group of truncated oxidized phospholipids and may play a role in detoxification of reactive oxidized phospholipids during oxidative stress. Required for normal phospholipid degradation in alveolar macrophages with potential implications in the clearance of pulmonary surfactant, which is mainly composed of dipalmitoylphosphatidylcholine (1,2-dihexadecanoyl-sn-glycero-3-phosphocholine). Involved in the first step of bis(monoacylglycero)phosphate (BMP) de novo synthesis from phosphatidylglycerol (1,2-diacyl-sn-glycero-3-phospho-(1'-sn-glycerol), PG). BMP is an important player in cargo sorting and degradation, regulation of cellular cholesterol levels and intercellular communication. At neutral pH, hydrolyzes the sn-1 fatty acyl group of the lysophosphatidylcholines. This chain is Lysosomal phospholipase A and acyltransferase, found in Mus musculus (Mouse).